We begin with the raw amino-acid sequence, 261 residues long: Phosphate import ATP-binding protein PstB 1 (261 aa).

Residues 8–256 (IKVNNLSFYY…PHDSRTREYV (249 aa)) form the ABC transporter domain. Residue 40–47 (GPSGCGKS) coordinates ATP.

This sequence belongs to the ABC transporter superfamily. Phosphate importer (TC 3.A.1.7) family. In terms of assembly, the complex is composed of two ATP-binding proteins (PstB), two transmembrane proteins (PstC and PstA) and a solute-binding protein (PstS).

The protein localises to the cell inner membrane. It catalyses the reaction phosphate(out) + ATP + H2O = ADP + 2 phosphate(in) + H(+). In terms of biological role, part of the ABC transporter complex PstSACB involved in phosphate import. Responsible for energy coupling to the transport system. The protein is Phosphate import ATP-binding protein PstB 1 of Nostoc sp. (strain PCC 7120 / SAG 25.82 / UTEX 2576).